Consider the following 95-residue polypeptide: MSEPVNKVKQTQQQVDDVTNTMHIAVGKMLDNQQKVSELTDKSENMKQGAQQFKKKTNEIKRLMWCRNIKLTLIIIAVVVLLLVVIIVPIVLKFT.

At Met1 to Lys70 the chain is on the cytoplasmic side. The v-SNARE coiled-coil homology domain occupies Lys7 to Arg67. The helical; Anchor for type IV membrane protein transmembrane segment at Leu71–Val91 threads the bilayer. Residues Leu92–Thr95 are Vesicular-facing.

This sequence belongs to the synaptobrevin family.

It localises to the cytoplasmic vesicle. The protein resides in the secretory vesicle membrane. Its function is as follows. Involved in the targeting and/or fusion of transport vesicles to their target membrane. In Dictyostelium discoideum (Social amoeba), this protein is Synaptobrevin-A (sybA).